The primary structure comprises 346 residues: Uroporphyrinogen decarboxylase (346 aa).

Substrate is bound by residues 23–27 (RQAGR), Asp73, Tyr151, Ser206, and His321.

This sequence belongs to the uroporphyrinogen decarboxylase family. In terms of assembly, homodimer.

It is found in the cytoplasm. It catalyses the reaction uroporphyrinogen III + 4 H(+) = coproporphyrinogen III + 4 CO2. It functions in the pathway porphyrin-containing compound metabolism; protoporphyrin-IX biosynthesis; coproporphyrinogen-III from 5-aminolevulinate: step 4/4. Functionally, catalyzes the decarboxylation of four acetate groups of uroporphyrinogen-III to yield coproporphyrinogen-III. The sequence is that of Uroporphyrinogen decarboxylase from Sulfurovum sp. (strain NBC37-1).